Here is a 173-residue protein sequence, read N- to C-terminus: Large ribosomal subunit protein uL10 (173 aa).

The protein belongs to the universal ribosomal protein uL10 family. Part of the ribosomal stalk of the 50S ribosomal subunit. The N-terminus interacts with L11 and the large rRNA to form the base of the stalk. The C-terminus forms an elongated spine to which L12 dimers bind in a sequential fashion forming a multimeric L10(L12)X complex.

Forms part of the ribosomal stalk, playing a central role in the interaction of the ribosome with GTP-bound translation factors. The chain is Large ribosomal subunit protein uL10 from Oleidesulfovibrio alaskensis (strain ATCC BAA-1058 / DSM 17464 / G20) (Desulfovibrio alaskensis).